A 209-amino-acid chain; its full sequence is tRNA (guanine-N(7)-)-methyltransferase (209 aa).

Aspartate 35, glutamate 60, asparagine 87, and aspartate 113 together coordinate S-adenosyl-L-methionine. Residue aspartate 113 is part of the active site. Substrate-binding residues include lysine 117 and aspartate 149.

It belongs to the class I-like SAM-binding methyltransferase superfamily. TrmB family.

It catalyses the reaction guanosine(46) in tRNA + S-adenosyl-L-methionine = N(7)-methylguanosine(46) in tRNA + S-adenosyl-L-homocysteine. Its pathway is tRNA modification; N(7)-methylguanine-tRNA biosynthesis. Its function is as follows. Catalyzes the formation of N(7)-methylguanine at position 46 (m7G46) in tRNA. This Prochlorococcus marinus (strain MIT 9515) protein is tRNA (guanine-N(7)-)-methyltransferase.